The following is an 88-amino-acid chain: Conotoxin tx9a (88 aa).

The first 27 residues, M1–S27, serve as a signal peptide directing secretion. The propeptide occupies G28 to S58. 3 disulfide bridges follow: C62–C76, C66–C78, and C72–C83. 4-carboxyglutamate; partial occurs at positions 68 and 73. At N87 the chain carries Asparagine amide.

In terms of processing, exists in 4 different forms, depending on gamma-carboxyglutamations. Tx9a-EE does not contain gamma-carboxyglutamate, tx9a-E/gamma has one gamma-carboxyglutamate at position 73, tx9a-gamma/E has one gamma-carboxyglutamate at position 68, and tx9a-agmma/gamma has two gamma-carboxyglutamates at positions 68 and 73. Expressed by the venom duct. All different gamma-carboxyalted forms are mostly present in part 2, part 3 and part 4 of the venom duct. They are also found in part 1 (proximal part near the venom bulb) and part 5, but in lower quantity.

It is found in the secreted. In terms of biological role, neurotoxin. In vivo, intracranial injection into mice of 10 pmol/g of the peptide induces running in circles and hyperactivity. At higher doses (50 pmol/g), the mice exhibit running and climbing symptoms for close to one hour. Between 130 and 150 pmol/g, characteristic 'spasmodic' symptomatology is elicited. A hand clap would make mice jump high and start running rapidly. When exposed to a loud hand clap, or if the cage cover were dropped, the mice lose motor control and exhibit seizure-like symptoms from which they eventually recover. At the highest doses tested (over 250 pmol/g), after the characteristic spasmodic symptomatology, lethality occurs. Injection of a similar dose range intramuscularly into Siamese fighting fish elicited no unusual symptomatology. This Conus textile (Cloth-of-gold cone) protein is Conotoxin tx9a.